Consider the following 313-residue polypeptide: MTQWYPASPALWQGRDDSIEAPDARRLFQTVTRSETFSPENWQQKIALMGFACDEGVKRNAGRPGAAGAPDALRKALANMASHQGHERLVDLGNWVAPTPDLEGAQQALRDAVSRCLRAGMRTLVLGGGHETAFGHGAGVLDVFAQESVGIINLDAHLDLRQTDRATSGTPFRQLAQLCDAQSRAFHYACFGVSRAANTQALWRETQWRNVTVVEDLDCHDALAQMTQFIDKVDKIYLTIDLDVLPVWEMPAVSAPAALGVPLIQVLRLIEPVCRSGKLQAADLVEFNPRFDEDGAAARVAARLGWQIAHWWR.

Residues His-130, Asp-155, His-157, Asp-159, Asp-241, and Asp-243 each contribute to the Mn(2+) site.

Belongs to the arginase family. Mn(2+) serves as cofactor.

The enzyme catalyses N-formimidoyl-L-glutamate + H2O = formamide + L-glutamate. The protein operates within amino-acid degradation; L-histidine degradation into L-glutamate; L-glutamate from N-formimidoyl-L-glutamate (hydrolase route): step 1/1. Its function is as follows. Catalyzes the conversion of N-formimidoyl-L-glutamate to L-glutamate and formamide. This is Formimidoylglutamase from Salmonella schwarzengrund (strain CVM19633).